A 504-amino-acid chain; its full sequence is Cobyric acid synthase (504 aa).

The GATase cobBQ-type domain maps to 251–448 (DITIAIVQLP…LHGLFDSDAF (198 aa)). Cys-332 functions as the Nucleophile in the catalytic mechanism. Residue His-440 is part of the active site.

This sequence belongs to the CobB/CobQ family. CobQ subfamily.

It functions in the pathway cofactor biosynthesis; adenosylcobalamin biosynthesis. In terms of biological role, catalyzes amidations at positions B, D, E, and G on adenosylcobyrinic A,C-diamide. NH(2) groups are provided by glutamine, and one molecule of ATP is hydrogenolyzed for each amidation. The sequence is that of Cobyric acid synthase from Salmonella gallinarum (strain 287/91 / NCTC 13346).